The following is a 312-amino-acid chain: Ribosomal large subunit pseudouridine synthase D (312 aa).

Positions 18–87 (QRLDLVLSKL…IPENIFLDIV (70 aa)) constitute an S4 RNA-binding domain. Aspartate 139 is an active-site residue.

This sequence belongs to the pseudouridine synthase RluA family.

It localises to the cytoplasm. The catalysed reaction is uridine(1911/1915/1917) in 23S rRNA = pseudouridine(1911/1915/1917) in 23S rRNA. In terms of biological role, responsible for synthesis of pseudouridine from uracil at positions 1911, 1915 and 1917 in 23S ribosomal RNA. This is Ribosomal large subunit pseudouridine synthase D (rluD) from Buchnera aphidicola subsp. Acyrthosiphon pisum (strain APS) (Acyrthosiphon pisum symbiotic bacterium).